The chain runs to 848 residues: Protein SEY1 (848 aa).

At methionine 1–glutamine 733 the chain is on the cytoplasmic side. The region spanning glycine 47–tyrosine 277 is the GB1/RHD3-type G domain. Glycine 57–serine 64 is a binding site for GTP. A helical membrane pass occupies residues valine 734–isoleucine 754. Topologically, residues arginine 755 to proline 757 are lumenal. Residues phenylalanine 758–leucine 778 form a helical membrane-spanning segment. Residues leucine 779–isoleucine 848 lie on the Cytoplasmic side of the membrane. A disordered region spans residues leucine 815–isoleucine 848. Over residues valine 829 to isoleucine 848 the composition is skewed to basic and acidic residues.

Belongs to the TRAFAC class dynamin-like GTPase superfamily. GB1/RHD3 GTPase family. RHD3 subfamily.

It is found in the endoplasmic reticulum membrane. Its function is as follows. Cooperates with the reticulon proteins and tubule-shaping DP1 family proteins to generate and maintain the structure of the tubular endoplasmic reticulum network. Has GTPase activity, which is required for its function in ER organization. This is Protein SEY1 from Pyricularia oryzae (strain 70-15 / ATCC MYA-4617 / FGSC 8958) (Rice blast fungus).